A 138-amino-acid chain; its full sequence is Large ribosomal subunit protein uL16 (138 aa).

The span at 1–16 (MLIPRRVKHRKQHHPG) shows a compositional bias: basic residues. Positions 1–24 (MLIPRRVKHRKQHHPGRSGAATGG) are disordered.

This sequence belongs to the universal ribosomal protein uL16 family. As to quaternary structure, part of the 50S ribosomal subunit.

Functionally, binds 23S rRNA and is also seen to make contacts with the A and possibly P site tRNAs. In Arthrobacter sp. (strain FB24), this protein is Large ribosomal subunit protein uL16.